The primary structure comprises 548 residues: WEB family protein At1g12150 (548 aa).

Positions 71–544 (KEFMKIKQKL…ELQRWRQQEN (474 aa)) form a coiled coil. Over residues 430-448 (VREEMKMISQKQESKKQDE) the composition is skewed to basic and acidic residues. The interval 430–455 (VREEMKMISQKQESKKQDEESSGSKI) is disordered.

The protein belongs to the WEB family.

In Arabidopsis thaliana (Mouse-ear cress), this protein is WEB family protein At1g12150.